The chain runs to 309 residues: Porphobilinogen deaminase (309 aa).

At Cys-240 the chain carries S-(dipyrrolylmethanemethyl)cysteine.

This sequence belongs to the HMBS family. As to quaternary structure, monomer. The cofactor is dipyrromethane.

The enzyme catalyses 4 porphobilinogen + H2O = hydroxymethylbilane + 4 NH4(+). It participates in porphyrin-containing compound metabolism; protoporphyrin-IX biosynthesis; coproporphyrinogen-III from 5-aminolevulinate: step 2/4. Functionally, tetrapolymerization of the monopyrrole PBG into the hydroxymethylbilane pre-uroporphyrinogen in several discrete steps. The chain is Porphobilinogen deaminase from Brevibacillus brevis (strain 47 / JCM 6285 / NBRC 100599).